The primary structure comprises 191 residues: Adenylate kinase (191 aa).

12–17 contacts ATP; it reads GSGKTT. The NMP stretch occupies residues 34–63; sequence STGDLLRAESAKKTERGLLIEKFTSQGELV. AMP is bound by residues Thr35, Arg40, 61-63, 88-91, and Gln95; these read ELV and GYPR. The interval 130–136 is LID; that stretch reads GRSRGAD. Arg131 lines the ATP pocket. 2 residues coordinate AMP: Arg133 and Arg145. Residue Arg173 participates in ATP binding.

It belongs to the adenylate kinase family. Monomer.

It localises to the cytoplasm. It catalyses the reaction AMP + ATP = 2 ADP. It functions in the pathway purine metabolism; AMP biosynthesis via salvage pathway; AMP from ADP: step 1/1. Catalyzes the reversible transfer of the terminal phosphate group between ATP and AMP. Plays an important role in cellular energy homeostasis and in adenine nucleotide metabolism. In Helicobacter pylori (strain HPAG1), this protein is Adenylate kinase.